The chain runs to 172 residues: Regulator of hemoglobinization and erythroid cell expansion protein (172 aa).

The helical transmembrane segment at 9–29 (WHGLVIAVVSLFLQACFLTAI) threads the bilayer. The interval 52–106 (VPRPSPGHHHPPAVKEMKETQTERDIPMSDSLYRHDSDTPSDSLDSSCSSPPACQ) is disordered. Residues 64–89 (AVKEMKETQTERDIPMSDSLYRHDSD) show a composition bias toward basic and acidic residues. Positions 91–103 (PSDSLDSSCSSPP) are enriched in low complexity. Residues Tyr-132 and Tyr-141 each carry the phosphotyrosine modification.

In terms of assembly, interacts with EPOR; this interaction occurs in a erythropoietin (EPO)-dependent manner. Interacts with JAK2; this interaction occurs in a erythropoietin (EPO)-dependent manner. Interacts (via tyrosine-phosphorylated form) with GRB2. In terms of processing, phosphorylated. Phosphorylation on Tyr-132 and Tyr-141 occurs in a erythropoietin (EPO)-dependent manner. Expressed in the proerythroblasts (at protein level). Expressed strongly in the kidney. Expressed weakly in the pancreas, liver and lung. Expressed strongly in erythroid progenitor cells (EPCs). Expressed weakly in T-cells and neutrophils.

The protein localises to the cell membrane. Acts as a signaling transduction factor of the EPO-EPOR signaling pathway promoting erythroid cell differentiation. This is Regulator of hemoglobinization and erythroid cell expansion protein from Homo sapiens (Human).